Reading from the N-terminus, the 302-residue chain is 1,2-dihydroxynaphthalene dioxygenase (302 aa).

VOC domains are found at residues 9 to 124 and 149 to 270; these read ELGY…IFWG and GLGH…PGWR. A Fe cation-binding site is contributed by His152. Substrate contacts are provided by residues His152, 199-200, His215, and Tyr256; that span reads DH. Residue His215 coordinates Fe cation. Position 266 (Glu266) interacts with Fe cation.

It belongs to the extradiol ring-cleavage dioxygenase family. Requires Fe(2+) as cofactor.

It catalyses the reaction naphthalene-1,2-diol + O2 = 2-hydroxychromene-2-carboxylate + H(+). It participates in aromatic compound metabolism; naphthalene degradation. With respect to regulation, inhibited by bathophenanthroline sulfonate, o-phenanthroline, 8-hydroxyquinoline, 2,2'-dipyridyl and p-chlormercuribenzoate. Also inhibited by Hg(2+), Cu(2+), Co(2+) and Fe(3+) ions. In terms of biological role, involved in the naphthalene catabolic pathway. Catalyzes the meta-cleavage of 1,2-dihydroxynaphthalene (1,2-DHN) to yield 2-hydroxychromene-2-carboxylic acid. Can also cleave 3-methylcatechol and 4-methylcatechol. The chain is 1,2-dihydroxynaphthalene dioxygenase (nahC) from Pseudomonas putida (Arthrobacter siderocapsulatus).